The sequence spans 215 residues: N-(5'-phosphoribosyl)anthranilate isomerase (215 aa).

This sequence belongs to the TrpF family.

The catalysed reaction is N-(5-phospho-beta-D-ribosyl)anthranilate = 1-(2-carboxyphenylamino)-1-deoxy-D-ribulose 5-phosphate. It functions in the pathway amino-acid biosynthesis; L-tryptophan biosynthesis; L-tryptophan from chorismate: step 3/5. This chain is N-(5'-phosphoribosyl)anthranilate isomerase, found in Rhizobium meliloti (strain 1021) (Ensifer meliloti).